The chain runs to 152 residues: Cell division protein SepF (152 aa).

A compositionally biased stretch (basic and acidic residues) spans 23–32 (EVAREPEPMQ). A disordered region spans residues 23-42 (EVAREPEPMQKKTKKEKPSK).

The protein belongs to the SepF family. As to quaternary structure, homodimer. Interacts with FtsZ.

The protein localises to the cytoplasm. Functionally, cell division protein that is part of the divisome complex and is recruited early to the Z-ring. Probably stimulates Z-ring formation, perhaps through the cross-linking of FtsZ protofilaments. Its function overlaps with FtsA. This chain is Cell division protein SepF, found in Listeria innocua serovar 6a (strain ATCC BAA-680 / CLIP 11262).